A 209-amino-acid polypeptide reads, in one-letter code: Uracil phosphoribosyltransferase (209 aa).

5-phospho-alpha-D-ribose 1-diphosphate-binding positions include Arg79, Arg104, and 131 to 139 (DPMLATGGS). Residues Ile194 and 199–201 (GDA) each bind uracil. Asp200 is a 5-phospho-alpha-D-ribose 1-diphosphate binding site.

This sequence belongs to the UPRTase family. Mg(2+) is required as a cofactor.

It catalyses the reaction UMP + diphosphate = 5-phospho-alpha-D-ribose 1-diphosphate + uracil. It participates in pyrimidine metabolism; UMP biosynthesis via salvage pathway; UMP from uracil: step 1/1. Its activity is regulated as follows. Allosterically activated by GTP. Its function is as follows. Catalyzes the conversion of uracil and 5-phospho-alpha-D-ribose 1-diphosphate (PRPP) to UMP and diphosphate. This Streptococcus thermophilus (strain CNRZ 1066) protein is Uracil phosphoribosyltransferase.